Here is a 514-residue protein sequence, read N- to C-terminus: ATP synthase subunit alpha (514 aa).

170 to 177 (GDRQTGKT) provides a ligand contact to ATP.

The protein belongs to the ATPase alpha/beta chains family. F-type ATPases have 2 components, CF(1) - the catalytic core - and CF(0) - the membrane proton channel. CF(1) has five subunits: alpha(3), beta(3), gamma(1), delta(1), epsilon(1). CF(0) has three main subunits: a(1), b(2) and c(9-12). The alpha and beta chains form an alternating ring which encloses part of the gamma chain. CF(1) is attached to CF(0) by a central stalk formed by the gamma and epsilon chains, while a peripheral stalk is formed by the delta and b chains.

It is found in the cell inner membrane. It catalyses the reaction ATP + H2O + 4 H(+)(in) = ADP + phosphate + 5 H(+)(out). Produces ATP from ADP in the presence of a proton gradient across the membrane. The alpha chain is a regulatory subunit. This is ATP synthase subunit alpha from Acinetobacter baumannii (strain AB307-0294).